Reading from the N-terminus, the 367-residue chain is Holliday junction branch migration complex subunit RuvB (367 aa).

The interval 2-196 (TDEPLTDRPP…FGFTARLDFY (195 aa)) is large ATPase domain (RuvB-L). ATP is bound by residues Leu-35, Arg-36, Gly-77, Lys-80, Thr-81, Thr-82, 143–145 (EDF), Arg-186, Tyr-196, and Arg-233. Residue Thr-81 coordinates Mg(2+). Residues 197–267 (EPADLERIVH…VAQAALAVYE (71 aa)) are small ATPAse domain (RuvB-S). The head domain (RuvB-H) stretch occupies residues 270–367 (EHGLDRLDRA…IDRDAGEPTA (98 aa)). DNA-binding residues include Arg-325 and Arg-330.

The protein belongs to the RuvB family. Homohexamer. Forms an RuvA(8)-RuvB(12)-Holliday junction (HJ) complex. HJ DNA is sandwiched between 2 RuvA tetramers; dsDNA enters through RuvA and exits via RuvB. An RuvB hexamer assembles on each DNA strand where it exits the tetramer. Each RuvB hexamer is contacted by two RuvA subunits (via domain III) on 2 adjacent RuvB subunits; this complex drives branch migration. In the full resolvosome a probable DNA-RuvA(4)-RuvB(12)-RuvC(2) complex forms which resolves the HJ.

Its subcellular location is the cytoplasm. It carries out the reaction ATP + H2O = ADP + phosphate + H(+). Its function is as follows. The RuvA-RuvB-RuvC complex processes Holliday junction (HJ) DNA during genetic recombination and DNA repair, while the RuvA-RuvB complex plays an important role in the rescue of blocked DNA replication forks via replication fork reversal (RFR). RuvA specifically binds to HJ cruciform DNA, conferring on it an open structure. The RuvB hexamer acts as an ATP-dependent pump, pulling dsDNA into and through the RuvAB complex. RuvB forms 2 homohexamers on either side of HJ DNA bound by 1 or 2 RuvA tetramers; 4 subunits per hexamer contact DNA at a time. Coordinated motions by a converter formed by DNA-disengaged RuvB subunits stimulates ATP hydrolysis and nucleotide exchange. Immobilization of the converter enables RuvB to convert the ATP-contained energy into a lever motion, pulling 2 nucleotides of DNA out of the RuvA tetramer per ATP hydrolyzed, thus driving DNA branch migration. The RuvB motors rotate together with the DNA substrate, which together with the progressing nucleotide cycle form the mechanistic basis for DNA recombination by continuous HJ branch migration. Branch migration allows RuvC to scan DNA until it finds its consensus sequence, where it cleaves and resolves cruciform DNA. This chain is Holliday junction branch migration complex subunit RuvB, found in Acidothermus cellulolyticus (strain ATCC 43068 / DSM 8971 / 11B).